The following is a 284-amino-acid chain: Ubiquitin thioesterase otubain-like (284 aa).

Residues 77–274 (GEIRYIRGDG…PGHYDVIYKK (198 aa)) form the OTU domain. Asp-85 is a catalytic residue. The active-site Nucleophile is Cys-88. Ile-176 serves as a coordination point for substrate. Residues His-245 and His-267 contribute to the active site.

This sequence belongs to the peptidase C65 family.

It catalyses the reaction Thiol-dependent hydrolysis of ester, thioester, amide, peptide and isopeptide bonds formed by the C-terminal Gly of ubiquitin (a 76-residue protein attached to proteins as an intracellular targeting signal).. Functionally, hydrolase that can remove conjugated ubiquitin from proteins and plays an important regulatory role at the level of protein turnover by preventing degradation. Specifically cleaves 'Lys-48'-linked polyubiquitin. The chain is Ubiquitin thioesterase otubain-like (otub-1) from Caenorhabditis elegans.